Reading from the N-terminus, the 292-residue chain is uncharacterized protein (292 aa).

The disordered stretch occupies residues 1 to 213; that stretch reads MTTAITPDKK…DQDDDDQKDL (213 aa). Composition is skewed to basic residues over residues 27–43 and 50–78; these read TKPRRSSKTSKKRKSKK and AKKRKTKRSKKSAKRTKRSAPKKAPKKAP. Over residues 90 to 100 the composition is skewed to polar residues; sequence QQAQASLQKPI. A compositionally biased stretch (pro residues) spans 116-134; that stretch reads PRPPTPIPPTGVKPEPAPR. The span at 143–158 shows a compositional bias: low complexity; that stretch reads SVSSTTPRTSATTGTT.

This is an uncharacterized protein from Caenorhabditis elegans.